Reading from the N-terminus, the 227-residue chain is N-acetyltransferase 8 (227 aa).

Over 1–42 the chain is Cytoplasmic; the sequence is MAPCHIRKYQESDRQWVVGLLSRGMAEHAPATFRQLLKLPRT. The helical; Signal-anchor for type II membrane protein transmembrane segment at 43-63 threads the bilayer; the sequence is LILLLGGPLALLLVSGSWLLA. The 160-residue stretch at 61 to 220 folds into the N-acetyltransferase domain; it reads LLALVFSISL…HTVHFIYHLP (160 aa). The Lumenal portion of the chain corresponds to 64 to 227; the sequence is LVFSISLFPA…HLPSSKVGSL (164 aa).

This sequence belongs to the NAT8 family. Preferentially expressed in liver and kidney. Also detected in brain (at protein level).

It is found in the endoplasmic reticulum-Golgi intermediate compartment membrane. The protein localises to the endoplasmic reticulum membrane. It carries out the reaction L-lysyl-[protein] + acetyl-CoA = N(6)-acetyl-L-lysyl-[protein] + CoA + H(+). The enzyme catalyses an S-substituted L-cysteine + acetyl-CoA = an N-acetyl-L-cysteine-S-conjugate + CoA + H(+). Its pathway is sulfur metabolism; glutathione metabolism. Its function is as follows. Endoplasmic reticulum (ER)-membrane-bound lysine N-acetyltransferase catalyzing the N6-acetylation of lysine residues in the lumen of the ER in various proteins, including PROM1 and BACE1, using acetyl-CoA as acetyl donor. Thereby, may regulate apoptosis through the acetylation and the regulation of the expression of PROM1. May also regulate amyloid beta-peptide secretion through acetylation of BACE1 and the regulation of its expression in neurons. N(6)-lysine acetylation in the ER maintains protein homeostasis and regulates reticulophagy. Alternatively, acetylates the free alpha-amino group of cysteine S-conjugates to form mercapturic acids. This is the final step in a major route for detoxification of a wide variety of reactive electrophiles which starts with their incorporation into glutathione S-conjugates. The glutathione S-conjugates are then further processed into cysteine S-conjugates and finally mercapturic acids which are water soluble and can be readily excreted in urine or bile. This is N-acetyltransferase 8 from Homo sapiens (Human).